Here is a 371-residue protein sequence, read N- to C-terminus: Peptidyl-prolyl cis-trans isomerase CPR6 (371 aa).

Positions 7–174 (FFDISIGGKP…RDVKIDDCGV (168 aa)) constitute a PPIase cyclophilin-type domain. 3 TPR repeats span residues 219–252 (IETVKNIGTEQFKKQNYSVALEKYVKCDKFLKEY), 270–303 (VSIPLNIAICALKLKDYKQVLVASSEVLYAEAAD), and 308–341 (AKALYRRGLAYYHVNDTDMALNDLEMATTFQPND).

Belongs to the cyclophilin-type PPIase family. PPIase D subfamily. As to quaternary structure, interacts with RPD3.

The protein resides in the cytoplasm. It catalyses the reaction [protein]-peptidylproline (omega=180) = [protein]-peptidylproline (omega=0). In terms of biological role, PPIases accelerate the folding of proteins. It catalyzes the cis-trans isomerization of proline imidic peptide bonds in oligopeptides. This Saccharomyces cerevisiae (strain ATCC 204508 / S288c) (Baker's yeast) protein is Peptidyl-prolyl cis-trans isomerase CPR6 (CPR6).